The primary structure comprises 494 residues: Sulfate adenylyltransferase subunit 1 (494 aa).

One can recognise a tr-type G domain in the interval 24–240 (TRPLRLITCG…LELATVRSAQ (217 aa)). The segment at 33-40 (GSVDDGKS) is G1. Residue 33–40 (GSVDDGKS) coordinates GTP. Positions 91–95 (GITID) are G2. Positions 112-115 (DTPG) are G3. GTP contacts are provided by residues 112–116 (DTPGH) and 167–170 (NKID). The tract at residues 167–170 (NKID) is G4. The tract at residues 204-206 (SAL) is G5.

This sequence belongs to the TRAFAC class translation factor GTPase superfamily. Classic translation factor GTPase family. CysN/NodQ subfamily. Heterodimer composed of CysD, the smaller subunit, and CysN.

The catalysed reaction is sulfate + ATP + H(+) = adenosine 5'-phosphosulfate + diphosphate. It participates in sulfur metabolism; hydrogen sulfide biosynthesis; sulfite from sulfate: step 1/3. In terms of biological role, with CysD forms the ATP sulfurylase (ATPS) that catalyzes the adenylation of sulfate producing adenosine 5'-phosphosulfate (APS) and diphosphate, the first enzymatic step in sulfur assimilation pathway. APS synthesis involves the formation of a high-energy phosphoric-sulfuric acid anhydride bond driven by GTP hydrolysis by CysN coupled to ATP hydrolysis by CysD. In Rhizobium tropici, this protein is Sulfate adenylyltransferase subunit 1.